A 383-amino-acid polypeptide reads, in one-letter code: S-adenosylmethionine synthase 1 (383 aa).

His15 contributes to the ATP binding site. Residue Asp17 coordinates Mg(2+). Position 43 (Glu43) interacts with K(+). Residues Glu56 and Gln99 each contribute to the L-methionine site. Positions 99-109 are flexible loop; the sequence is QSPDIDLGVSR. ATP is bound by residues 162–164, 228–229, Asp237, 243–244, Ala260, and Lys264; these read DGK, RF, and RK. Asp237 contacts L-methionine. Lys268 lines the L-methionine pocket.

The protein belongs to the AdoMet synthase family. Homotetramer; dimer of dimers. Requires Mg(2+) as cofactor. K(+) serves as cofactor.

The protein resides in the cytoplasm. It catalyses the reaction L-methionine + ATP + H2O = S-adenosyl-L-methionine + phosphate + diphosphate. It participates in amino-acid biosynthesis; S-adenosyl-L-methionine biosynthesis; S-adenosyl-L-methionine from L-methionine: step 1/1. In terms of biological role, catalyzes the formation of S-adenosylmethionine (AdoMet) from methionine and ATP. The overall synthetic reaction is composed of two sequential steps, AdoMet formation and the subsequent tripolyphosphate hydrolysis which occurs prior to release of AdoMet from the enzyme. The sequence is that of S-adenosylmethionine synthase 1 from Rhodospirillum rubrum (strain ATCC 11170 / ATH 1.1.1 / DSM 467 / LMG 4362 / NCIMB 8255 / S1).